We begin with the raw amino-acid sequence, 381 residues long: Prolargin (381 aa).

The first 21 residues, 1-21 (MRSSLCWLLTLLLILATAAQG), serve as a signal peptide directing secretion. Positions 19 to 65 (AQGQPTRRPRPRPRPRPRPRLRPTPSFPQPDEPTEPTDLPPPLPPGP) are disordered. Residues 25–39 (RRPRPRPRPRPRPRL) show a composition bias toward basic residues. The segment covering 56–65 (DLPPPLPPGP) has biased composition (pro residues). LRR repeat units lie at residues 94 to 113 (RKVPVIPSRIHYLYLQNNFI), 114 to 137 (TELPVESFKNATGLRWINLDNNRI), 138 to 161 (RKVDQRVLEKLPSLVFLYLEKNQL), 162 to 182 (EEVPAALPRNLEQLRLSQNQI), 183 to 206 (SRIPPGVFSKLENLLLLDLQHNKL), 207 to 232 (SDGVFKPDTFQGLKNLMQLNLAHNTL), 233 to 253 (RKMPPKVPSAIHQLYLDSNRI), 254 to 277 (EAIPSGYFKGFPNLAFIRLNYNQL), 278 to 302 (SDRGLPKNSFNISNLLVLHLSHNRI), 303 to 322 (SSVPAISSRLEHLYLNNNSI), 323 to 361 (EKINGTQICPNNIVAFHDFSSDLEHVPHLRYLRLDGNYL), and 362 to 381 (KPPIPLDLMMCFRLLQSVVI). Asparagine 123 carries an N-linked (GlcNAc...) asparagine glycan. Asparagine 288, asparagine 319, and asparagine 326 each carry an N-linked (GlcNAc...) asparagine glycan. The cysteines at positions 331 and 372 are disulfide-linked.

It belongs to the small leucine-rich proteoglycan (SLRP) family. SLRP class II subfamily. As to quaternary structure, binds the basement membrane heparan sulfate proteoglycan perlecan and triple helical collagens type I and type II. Post-translationally, glycosylated; contains heparan sulfate.

The protein localises to the secreted. It is found in the extracellular space. Its subcellular location is the extracellular matrix. In terms of biological role, may anchor basement membranes to the underlying connective tissue. The polypeptide is Prolargin (PRELP) (Bos taurus (Bovine)).